The sequence spans 277 residues: Insulin-induced gene 1 protein (277 aa).

Over 1-84 the chain is Cytoplasmic; it reads MPRLHDHFWS…PYPNTWHHRL (84 aa). A compositionally biased stretch (low complexity) spans 51-66; that stretch reads HGAPDADPAPRGRSAA. The disordered stretch occupies residues 51–73; the sequence is HGAPDADPAPRGRSAAMSGPEPG. Residues 85–107 form a helical membrane-spanning segment; it reads LQRSLVLFSVGVVLALVLNLLQI. Over 108–126 the chain is Lumenal; that stretch reads QRNVTLFPEEVIATIFSSA. A helical membrane pass occupies residues 127-144; it reads WWVPPCCGTAAAVVGLLY. The Cytoplasmic segment spans residues 145–159; sequence PCIDSHLGEPHKFKR. Residues lysine 156 and lysine 158 each participate in a glycyl lysine isopeptide (Lys-Gly) (interchain with G-Cter in ubiquitin) cross-link. The helical transmembrane segment at 160-182 threads the bilayer; the sequence is EWASVMRCIAVFVGINHASAKLD. Over 183 to 185 the chain is Lumenal; sequence FAN. The helical transmembrane segment at 186–204 threads the bilayer; that stretch reads NVQLSLTLAALSLGLWWTF. The Cytoplasmic segment spans residues 205-209; that stretch reads DRSRS. Serine 207 carries the phosphoserine; by PCK1 modification. The helical transmembrane segment at 210–231 threads the bilayer; the sequence is GLGLGITIAFLATLITQFLVYN. At 232–245 the chain is on the lumenal side; sequence GVYQYTSPDFLYIR. The helical transmembrane segment at 246–263 threads the bilayer; that stretch reads SWLPCIFFSGGVTVGNIG. The Cytoplasmic segment spans residues 264-277; the sequence is RQLAMGVPEKPHSD. Residues 271–277 carry the KxHxx motif; that stretch reads PEKPHSD.

The protein belongs to the INSIG family. In terms of assembly, interacts with SCAP; interaction is direct and only takes place in the presence of sterols; it prevents interaction between SCAP and the coat protein complex II (COPII). Associates with the SCAP-SREBP complex (composed of SCAP and SREBF1/SREBP1 or SREBF2/SREBP2); association is mediated via its interaction with SCAP and only takes place in the presence of sterols. Interaction with SCAP is mutually exclusive with PAQR3. Interacts with HMGCR (via its SSD); the interaction, accelerated by sterols, leads to the recruitment of HMGCR to AMFR/gp78 for its ubiquitination by the sterol-mediated ERAD pathway. Interacts with AMFR/gp78 (via its membrane domain); the interaction recruits HMCR at the ER membrane for its ubiquitination and degradation by the sterol-mediated ERAD pathway. Interacts with SOAT2/ACAT2; leading to promote recruitment of AMFR/gp78 and subsequent ubiquitination of SOAT2/ACAT2. Interacts with RNF139. Interacts with RNF145. Phosphorylation at Ser-207 by PCK1 reduces binding to oxysterol, disrupting the interaction between INSIG1 and SCAP, thereby promoting nuclear translocation of SREBP proteins (SREBF1/SREBP1 or SREBF2/SREBP2) and subsequent transcription of downstream lipogenesis-related genes. Post-translationally, ubiquitinated by AMFR/gp78 in response to sterol deprivation, leading to its degradation: when the SCAP-SREBP complex becomes dissociated from INSIG1, INSIG1 is then ubiquitinated and degraded in proteasomes. Although ubiquitination is required for rapid INSIG1 degradation, it is not required for release of the SCAP-SREBP complex. Ubiquitinated by RNF139. As to expression, expressed in all tissues tested with highest expression in the liver.

The protein resides in the endoplasmic reticulum membrane. In terms of biological role, oxysterol-binding protein that mediates feedback control of cholesterol synthesis by controlling both endoplasmic reticulum to Golgi transport of SCAP and degradation of HMGCR. Acts as a negative regulator of cholesterol biosynthesis by mediating the retention of the SCAP-SREBP complex in the endoplasmic reticulum, thereby blocking the processing of sterol regulatory element-binding proteins (SREBPs) SREBF1/SREBP1 and SREBF2/SREBP2. Binds oxysterol, including 25-hydroxycholesterol, regulating interaction with SCAP and retention of the SCAP-SREBP complex in the endoplasmic reticulum. In presence of oxysterol, interacts with SCAP, retaining the SCAP-SREBP complex in the endoplasmic reticulum, thereby preventing SCAP from escorting SREBF1/SREBP1 and SREBF2/SREBP2 to the Golgi. Sterol deprivation or phosphorylation by PCK1 reduce oxysterol-binding, disrupting the interaction between INSIG1 and SCAP, thereby promoting Golgi transport of the SCAP-SREBP complex, followed by processing and nuclear translocation of SREBF1/SREBP1 and SREBF2/SREBP2. Also regulates cholesterol synthesis by regulating degradation of HMGCR: initiates the sterol-mediated ubiquitin-mediated endoplasmic reticulum-associated degradation (ERAD) of HMGCR via recruitment of the reductase to the ubiquitin ligases AMFR/gp78 and/or RNF139. Also regulates degradation of SOAT2/ACAT2 when the lipid levels are low: initiates the ubiquitin-mediated degradation of SOAT2/ACAT2 via recruitment of the ubiquitin ligases AMFR/gp78. The polypeptide is Insulin-induced gene 1 protein (Homo sapiens (Human)).